The chain runs to 728 residues: Catalase-peroxidase (728 aa).

The segment at 1-26 (MDNPTDTAGKCPVAHGNKPRGPSNRD) is disordered. A cross-link (tryptophyl-tyrosyl-methioninium (Trp-Tyr) (with M-244)) is located at residues 96 to 218 (WHSAGTYRIT…LGAVQMGLIY (123 aa)). The Proton acceptor role is filled by His-97. The segment at residues 218–244 (YVNPEGPGGNPDPLASARDIRETFARM) is a cross-link (tryptophyl-tyrosyl-methioninium (Tyr-Met) (with W-96)). His-259 serves as a coordination point for heme b.

It belongs to the peroxidase family. Peroxidase/catalase subfamily. As to quaternary structure, homodimer or homotetramer. The cofactor is heme b. In terms of processing, formation of the three residue Trp-Tyr-Met cross-link is important for the catalase, but not the peroxidase activity of the enzyme.

It carries out the reaction H2O2 + AH2 = A + 2 H2O. The enzyme catalyses 2 H2O2 = O2 + 2 H2O. Bifunctional enzyme with both catalase and broad-spectrum peroxidase activity. The protein is Catalase-peroxidase of Rhizobium etli (strain CIAT 652).